Reading from the N-terminus, the 294-residue chain is Endonuclease G, mitochondrial (294 aa).

The transit peptide at 1 to 44 (MRALRAGLTLALGAGLGAAAEHWRRREGKAPGLLGRVPLLPVVA) directs the protein to the mitochondrion. Phosphothreonine is present on threonine 125. Histidine 138 serves as the catalytic Proton acceptor. Residue asparagine 169 coordinates Mg(2+). The segment at 283–293 (AGNLKAITAGS) is essential for deoxyribonuclease activity.

It belongs to the DNA/RNA non-specific endonuclease family. In terms of assembly, homodimer; disulfide-linked. Homodimerization is essential for its activity. Interacts with YWHAG. Mg(2+) is required as a cofactor. GSK3-beta-mediated phosphorylation at Thr-125 is necessary for its interaction with YWHAG and the induction of autophagy.

The protein localises to the mitochondrion. Functionally, endonuclease that preferentially catalyzes the cleavage of double-stranded 5-hydroxymethylcytosine (5hmC)-modified DNA. The 5hmC-modified nucleotide does not increase the binding affinity, but instead increases the efficiency of cutting and specifies the site of cleavage for the modified DNAs. Shows significantly higher affinity for four-stranded Holliday junction over duplex and single-stranded DNAs. Promotes conservative recombination when the DNA is 5hmC-modified. Promotes autophagy through the suppression of mTOR by its phosphorylation-mediated interaction with YWHAG and its endonuclease activity-mediated DNA damage response. GSK3-beta mediated phosphorylation of ENDOG enhances its interaction with YWHAG, leading to the release of TSC2 and PIK3C3 from YWHAG resulting in mTOR pathway suppression and autophagy initiation. Promotes cleavage of mtDNA in response to oxidative and nitrosative stress, in turn inducing compensatory mtDNA replication. This chain is Endonuclease G, mitochondrial (Endog), found in Mus musculus (Mouse).